The primary structure comprises 522 residues: L-tyrosine/L-DOPA decarboxylase 2 (522 aa).

Tandem repeats lie at residues 75–132 and 135–186. The interval 75–186 is 2 X approximate tandem repeats; that stretch reads KDVHDDIVPG…RILDRIGREH (112 aa). Thr-163, Cys-164, Thr-258, and Asn-312 together coordinate pyridoxal 5'-phosphate. At Lys-315 the chain carries N6-(pyridoxal phosphate)lysine.

The protein belongs to the group II decarboxylase family. Pyridoxal 5'-phosphate is required as a cofactor. As to expression, strongly expressed in all tissues, particularly in thick roots.

It catalyses the reaction L-tyrosine + H(+) = tyramine + CO2. The catalysed reaction is L-dopa + H(+) = dopamine + CO2. It participates in aromatic compound metabolism. The protein operates within alkaloid biosynthesis. Its function is as follows. Aromatic amino acid decarboxylase participating in the biosynthesis of natural products derived from phenylethylamine, including mescaline, a natural hallucinogen potentially used in psychotherapeutic treatments. Catalyzes the decarboxylation of L-tyrosine and L-DOPA. This chain is L-tyrosine/L-DOPA decarboxylase 2, found in Lophophora williamsii (Peyote).